We begin with the raw amino-acid sequence, 418 residues long: Vasopressin V1a receptor (418 aa).

The segment covering Met-1–Ser-15 has biased composition (low complexity). The segment at Met-1–Leu-20 is disordered. The Extracellular segment spans residues Met-1–Lys-51. 2 N-linked (GlcNAc...) asparagine glycosylation sites follow: Asn-13 and Asn-26. A helical membrane pass occupies residues Leu-52 to Leu-75. Topologically, residues His-76–Leu-87 are cytoplasmic. A helical membrane pass occupies residues Phe-88 to Gly-109. At Trp-110–Arg-124 the chain is on the extracellular side. Cysteines 123 and 202 form a disulfide. The helical transmembrane segment at Val-125–Ala-146 threads the bilayer. The Cytoplasmic portion of the chain corresponds to Asp-147–Arg-167. The chain crosses the membrane as a helical span at residues Leu-168–Ser-189. Over Met-190–Thr-217 the chain is Extracellular. An N-linked (GlcNAc...) asparagine glycan is attached at Asn-195. A helical transmembrane segment spans residues Trp-218–Ile-238. Residues Cys-239 to Thr-293 lie on the Cytoplasmic side of the membrane. A helical transmembrane segment spans residues Phe-294–Trp-313. Topologically, residues Ser-314–Ala-331 are extracellular. N-linked (GlcNAc...) asparagine glycosylation is present at Asn-319. Residues Ile-332–Phe-351 traverse the membrane as a helical segment. At Ser-352 to Thr-418 the chain is on the cytoplasmic side. Residues Cys-365 and Cys-366 are each lipidated (S-palmitoyl cysteine). The disordered stretch occupies residues Gly-377–Thr-418. Polar residues predominate over residues Arg-383 to Gly-399. Ser-404 is subject to Phosphoserine.

Belongs to the G-protein coupled receptor 1 family. Vasopressin/oxytocin receptor subfamily.

It is found in the cell membrane. Receptor for arginine vasopressin. The activity of this receptor is mediated by G proteins which activate a phosphatidyl-inositol-calcium second messenger system. This chain is Vasopressin V1a receptor (AVPR1A), found in Ovis aries (Sheep).